A 1055-amino-acid polypeptide reads, in one-letter code: SMC5-SMC6 complex localization factor protein 1 (1055 aa).

2 consecutive BRCT domains span residues 2-80 (EDDA…AQSG) and 121-199 (PGAF…LLEK). The interval 312–332 (KKRKKEKERDSRKDIEHDRST) is disordered. The span at 318-332 (KERDSRKDIEHDRST) shows a compositional bias: basic and acidic residues. Positions 407-1055 (PRGILNLIES…VMCRSVTEIS (649 aa)) are NSE5-like domain; mediates interaction with SLF2. 3 ANK repeats span residues 804–834 (KGET…DINV), 838–867 (AGWT…EVDL), and 872–901 (DGVT…PVLL). Lys929 is covalently cross-linked (Glycyl lysine isopeptide (Lys-Gly) (interchain with G-Cter in SUMO2)).

Interacts (via N-terminus) with SLF2; this interaction links RAD18 to the SMC5-SMC6 complex. Interacts (via BRCT domains) with RAD18; this interaction occurs in a SLF2-independent manner. Interacts with SMC6. Interacts (via BRCT domains) with RAD18 (via C-terminus and phosphorylated form); this interaction is required for efficient repair of UV-induced DNA damage.

Its subcellular location is the nucleus. The protein resides in the cytoplasm. It is found in the cytoskeleton. It localises to the microtubule organizing center. The protein localises to the centrosome. In terms of biological role, plays a role in the DNA damage response (DDR) pathway by regulating postreplication repair of UV-damaged DNA and genomic stability maintenance. The SLF1-SLF2 complex acts to link RAD18 with the SMC5-SMC6 complex at replication-coupled interstrand cross-links (ICL) and DNA double-strand breaks (DSBs) sites on chromatin during DNA repair in response to stalled replication forks. Promotes the recruitment of SLF2 and the SMC5-SMC6 complex to DNA lesions. The chain is SMC5-SMC6 complex localization factor protein 1 from Bos taurus (Bovine).